The primary structure comprises 317 residues: Ribosomal RNA small subunit methyltransferase H (317 aa).

Residues 36-38, aspartate 56, phenylalanine 80, aspartate 102, and glutamine 109 each bind S-adenosyl-L-methionine; that span reads GGH.

Belongs to the methyltransferase superfamily. RsmH family.

It is found in the cytoplasm. It catalyses the reaction cytidine(1402) in 16S rRNA + S-adenosyl-L-methionine = N(4)-methylcytidine(1402) in 16S rRNA + S-adenosyl-L-homocysteine + H(+). Functionally, specifically methylates the N4 position of cytidine in position 1402 (C1402) of 16S rRNA. This is Ribosomal RNA small subunit methyltransferase H from Baumannia cicadellinicola subsp. Homalodisca coagulata.